Reading from the N-terminus, the 1307-residue chain is MYRYNRSSPFERTPEKRVSRQESQRKSIELPKLPPLNTRNSFLDDSDNGTDNISIGWTPISDTQQFQSPVPQAFTFTSKHSARGNGTSSSESTPKSTKYVKERRPPPPPPLLYSTESIRIDSPMVSPSSQSRERSPNKLSFIGNSEERHHMEYISNHSRILKSPFANGFSPNSPKSPRDSSKQQAHFSDESDLRCHEREKALPPIPFTTTLLLSPFDDEDSEFFTKPPPPLSTSRNVSGNSRVSEALESVYSDSDYTFNNSNARQSSFNSLLGAKPLELAPSITAPTQPFSIQSIDEHKLYQCDNVYKLSAIYEWILKVYFEWFNECVFTKIDLFQIVQLLLEFQMPTNFDQDTIDSNVDNIMASFISQKAVRFDIINDEEVAVVVGGLDITGVFTELLPCYSFIDNTYGSTNSLICYSNVCTHGQSSGFRKEIKLSEIINKSVGLWTEYWHLTPDDLAEINPREVQRQSFIFDLIILEERSLNMATAAVEIYGKRFDKSLLPDEPEFKALAFDIFEPLIQLHTEFLLTPIFWKLKTRGKFIDGVGKIYSKWCGEAKNIYLNYAKAMATVHEIIMWEKKNKTKFVTWLKEIDNSVEITRSKMYHDVIFFGGFFKSLQNMPVTLRSILKNTDPSMEDYEYLKIVIKEVEKLNFEVNQVHGLAIDHRKLVRFSKQLVLSTNSSNATSYVNVGGSTNANDDDAIQDKLALGLTYPERKLVLSGTVYKKRDLWLDPTPVYIALLDNCLLITEEISKGETQKYKLIERPIPIDYLSLEKRKIPGTSKQPLRNYSQKEHKSPMHNFSTPINSMRPLLKSSGNHMSTAYGDRKTSNTEISNANPNTDEFSFKIRNTATGESFKFFTESAEVLNQWIDAIMESFKRNAENHDLNAFEFTVLSSEFAYFDKDAPVNLPVAPEGSEIDVALKAYAQKANKDSCSWSKTTRILCCEDVKFEGRIYLFVATTDGIYVKYRDDYGSGFVKILELNDVKRMEANVKLGLLFVLDNRKLCYFNISTVVSRYLAQGNTLDENCIVGTVIRDKVRFFKIADDFGNSKHLFFERKGKIVILTPEFDQLTNQVKYFKFYKEYKLPSSSNNILNNEIEDIAIFRKSFAVCTKKTVILYQDSFEDNGIVLPSFLNDKDMMAHLRHPHLNSLPFKSATDSKKRPSIESLTEEAKKDIATCKAIPVNFFQISQSSFFALVYDEAVVKINCYGEMSDWRKDILLLDFCCTGASFHGNHLILVGDNLIQIYDLKNVEQNLGELVPVQIIKGKKIKLASSERREKTILVLSHPNILNRQLLVACNPVAMADHQ.

Positions Met1–Phe10 are enriched in polar residues. 3 disordered regions span residues Met1–Asn144, Pro164–Arg194, and Glu219–Gly239. The span at Arg12–Glu29 shows a compositional bias: basic and acidic residues. Over residues Asn37–Lys79 the composition is skewed to polar residues. The span at Thr87–Thr97 shows a compositional bias: low complexity. Residues Ser176 to Arg194 are compositionally biased toward basic and acidic residues. Residues Gln467–Val657 enclose the DH domain. The PH domain maps to Lys715–Lys877. The tract at residues Thr780 to Thr802 is disordered. Positions Thr938–Lys1279 constitute a CNH domain.

As to quaternary structure, interacts with RHO1.

Functionally, guanine nucleotide-exchange factor (GEF) for RHO1 that stimulates the exchange of RHO1 GDP-bound form into GTP-bound form. Required for signaling of cell wall defects to RHO1. This is Rho1 guanine nucleotide exchange factor TUS1 (TUS1) from Saccharomyces cerevisiae (strain ATCC 204508 / S288c) (Baker's yeast).